A 409-amino-acid polypeptide reads, in one-letter code: Fructose-1,6-bisphosphatase, chloroplastic (409 aa).

A chloroplast-targeting transit peptide spans 1-49 (MAAATTTTSRPLLLSRQQAAASSLQCRLPRRPGSSLFAGQGQASTPNVR). Glu-131, Glu-160, Asp-181, Leu-183, and Asp-184 together coordinate Mg(2+). Residue 184–187 (DGSS) coordinates substrate. Cysteines 223 and 228 form a disulfide. The substrate site is built by Asn-287, Tyr-319, Tyr-337, Tyr-339, and Lys-349. Glu-355 contributes to the Mg(2+) binding site.

The protein belongs to the FBPase class 1 family. In terms of assembly, homotetramer. Requires Mg(2+) as cofactor. In terms of tissue distribution, in photosynthetically active tissues, and in the shoot and root apical meristems.

The protein localises to the plastid. It is found in the chloroplast. The catalysed reaction is beta-D-fructose 1,6-bisphosphate + H2O = beta-D-fructose 6-phosphate + phosphate. Its pathway is carbohydrate biosynthesis; Calvin cycle. The chain is Fructose-1,6-bisphosphatase, chloroplastic (FBP) from Triticum aestivum (Wheat).